The primary structure comprises 295 residues: sn-glycerol-3-phosphate transport system permease protein UgpA (295 aa).

The Cytoplasmic portion of the chain corresponds to 1 to 11; that stretch reads MSSSRPVFRSR. The helical transmembrane segment at 12–32 threads the bilayer; the sequence is WLPYLLVAPQLVITVIFFIWP. Topologically, residues 33-80 are periplasmic; that stretch reads AGEALWYSLQSVDPFGFSSQFVGLENFVALFHDSYYLDAFWTTIKFSA. The 209-residue stretch at 76-284 folds into the ABC transmembrane type-1 domain; sequence IKFSALVTFS…FLVIILTVVQ (209 aa). The chain crosses the membrane as a helical span at residues 81–101; the sequence is LVTFSGLLVSLFFAALVDYVV. At 102-109 the chain is on the cytoplasmic side; it reads RGSRFYQT. A helical membrane pass occupies residues 110–130; it reads LMLLPYAVAPAVAAVLWIFLF. Residues 131-157 are Periplasmic-facing; that stretch reads NPGRGLITHFLGEFGYDWNHAQNSGQA. Residues 158 to 178 form a helical membrane-spanning segment; the sequence is MFLVVFASVWKQISYNFLFFF. The Cytoplasmic portion of the chain corresponds to 179 to 207; it reads AALQSIPRSLVEAAAIDGAGPIRRFFRLS. A helical transmembrane segment spans residues 208–228; it reads LPLIAPVSFFLLVVNLVYAFF. Over 229–262 the chain is Periplasmic; that stretch reads DTFPVIDAATAGGPVQATTTLIYKIYREGFTGLD. The chain crosses the membrane as a helical span at residues 263 to 283; it reads LSASAAQSVVLMFLVIILTVV. The Cytoplasmic portion of the chain corresponds to 284-295; that stretch reads QFRYVESKVRYQ.

This sequence belongs to the binding-protein-dependent transport system permease family. UgpAE subfamily. In terms of assembly, the complex is composed of two ATP-binding proteins (UgpC), two transmembrane proteins (UgpA and UgpE) and a solute-binding protein (UgpB).

It localises to the cell inner membrane. Part of the ABC transporter complex UgpBAEC involved in sn-glycerol-3-phosphate (G3P) import. Probably responsible for the translocation of the substrate across the membrane. The sequence is that of sn-glycerol-3-phosphate transport system permease protein UgpA (ugpA) from Salmonella typhimurium (strain LT2 / SGSC1412 / ATCC 700720).